Here is a 537-residue protein sequence, read N- to C-terminus: Hexahomomethionine N-hydroxylase (537 aa).

A helical transmembrane segment spans residues 7-27 (FNTCFQILLGFIVFIASITLL).

Belongs to the cytochrome P450 family. Heme serves as cofactor. As to expression, highly expressed in hypocotyl and roots. Lower expression in siliques, stems and leaves. Barely detectable in flowers. Expressed only in the vascular bundles in apical plant parts.

It localises to the endoplasmic reticulum membrane. The catalysed reaction is L-hexahomomethionine + 2 reduced [NADPH--hemoprotein reductase] + 2 O2 = (E)-9-(methylsulfanyl)nonanal oxime + 2 oxidized [NADPH--hemoprotein reductase] + CO2 + 3 H2O + 2 H(+). It carries out the reaction L-pentahomomethionine + 2 reduced [NADPH--hemoprotein reductase] + 2 O2 = (E)-8-(methylsulfanyl)octanal oxime + 2 oxidized [NADPH--hemoprotein reductase] + CO2 + 3 H2O + 2 H(+). The enzyme catalyses an L-polyhomomethionine + 2 reduced [NADPH--hemoprotein reductase] + 2 O2 = an (E)-omega-(methylsulfanyl)-alkanal oxime + 2 oxidized [NADPH--hemoprotein reductase] + CO2 + 3 H2O + 2 H(+). Its function is as follows. Catalyzes the conversion of the long chain elongated methionines penta- and hexahomomethionine to their corresponding aldoximes 8-methylthiooctanaldoxime and 9-methylthiononanaldoxime. The sequence is that of Hexahomomethionine N-hydroxylase (CYP79F2) from Arabidopsis thaliana (Mouse-ear cress).